The following is a 153-amino-acid chain: UPF0768 protein PB2B2.18 (153 aa).

The protein belongs to the UPF0768 family.

The polypeptide is UPF0768 protein PB2B2.18 (Schizosaccharomyces pombe (strain 972 / ATCC 24843) (Fission yeast)).